The sequence spans 241 residues: Probable pectate lyase D (241 aa).

The signal sequence occupies residues 1–17; sequence MYQKSLLFSLLATSALA. N-linked (GlcNAc...) asparagine glycosylation occurs at Asn-215. A disordered region spans residues 215–241; the sequence is NNSGDEPEEVSEGPSDACQYSEPLSSC.

It belongs to the polysaccharide lyase 3 family. Ca(2+) serves as cofactor.

It localises to the secreted. It carries out the reaction Eliminative cleavage of (1-&gt;4)-alpha-D-galacturonan to give oligosaccharides with 4-deoxy-alpha-D-galact-4-enuronosyl groups at their non-reducing ends.. Pectinolytic enzyme consist of four classes of enzymes: pectin lyase, polygalacturonase, pectin methylesterase and rhamnogalacturonase. Among pectinolytic enzymes, pectin lyase is the most important in depolymerization of pectin, since it cleaves internal glycosidic bonds of highly methylated pectins. Favors pectate, the anion, over pectin, the methyl ester. This chain is Probable pectate lyase D (plyD), found in Neosartorya fischeri (strain ATCC 1020 / DSM 3700 / CBS 544.65 / FGSC A1164 / JCM 1740 / NRRL 181 / WB 181) (Aspergillus fischerianus).